Consider the following 356-residue polypeptide: Holliday junction branch migration complex subunit RuvB (356 aa).

The large ATPase domain (RuvB-L) stretch occupies residues 4 to 191; that stretch reads TDKLATEQRI…FGIVARLEFY (188 aa). Residues Leu-30, Arg-31, Gly-72, Lys-75, Thr-76, Thr-77, 138 to 140, Arg-181, Tyr-191, and Arg-228 each bind ATP; that span reads EDY. Thr-76 provides a ligand contact to Mg(2+). Residues 192–262 form a small ATPAse domain (RuvB-S) region; that stretch reads DAEQLSRIVR…VADAALAMLD (71 aa). The segment at 265–356 is head domain (RuvB-H); the sequence is PVGFDLMDRK…RGEWDTPDGK (92 aa). 3 residues coordinate DNA: Arg-301, Arg-320, and Arg-325.

This sequence belongs to the RuvB family. As to quaternary structure, homohexamer. Forms an RuvA(8)-RuvB(12)-Holliday junction (HJ) complex. HJ DNA is sandwiched between 2 RuvA tetramers; dsDNA enters through RuvA and exits via RuvB. An RuvB hexamer assembles on each DNA strand where it exits the tetramer. Each RuvB hexamer is contacted by two RuvA subunits (via domain III) on 2 adjacent RuvB subunits; this complex drives branch migration. In the full resolvosome a probable DNA-RuvA(4)-RuvB(12)-RuvC(2) complex forms which resolves the HJ.

It is found in the cytoplasm. The enzyme catalyses ATP + H2O = ADP + phosphate + H(+). Its function is as follows. The RuvA-RuvB-RuvC complex processes Holliday junction (HJ) DNA during genetic recombination and DNA repair, while the RuvA-RuvB complex plays an important role in the rescue of blocked DNA replication forks via replication fork reversal (RFR). RuvA specifically binds to HJ cruciform DNA, conferring on it an open structure. The RuvB hexamer acts as an ATP-dependent pump, pulling dsDNA into and through the RuvAB complex. RuvB forms 2 homohexamers on either side of HJ DNA bound by 1 or 2 RuvA tetramers; 4 subunits per hexamer contact DNA at a time. Coordinated motions by a converter formed by DNA-disengaged RuvB subunits stimulates ATP hydrolysis and nucleotide exchange. Immobilization of the converter enables RuvB to convert the ATP-contained energy into a lever motion, pulling 2 nucleotides of DNA out of the RuvA tetramer per ATP hydrolyzed, thus driving DNA branch migration. The RuvB motors rotate together with the DNA substrate, which together with the progressing nucleotide cycle form the mechanistic basis for DNA recombination by continuous HJ branch migration. Branch migration allows RuvC to scan DNA until it finds its consensus sequence, where it cleaves and resolves cruciform DNA. The sequence is that of Holliday junction branch migration complex subunit RuvB from Burkholderia lata (strain ATCC 17760 / DSM 23089 / LMG 22485 / NCIMB 9086 / R18194 / 383).